The following is a 610-amino-acid chain: Autophagy-related protein 22-1 (610 aa).

Positions Met1–Pro11 are enriched in pro residues. Residues Met1–Pro29 are disordered. A helical transmembrane segment spans residues Ile35–Ser55. An N-linked (GlcNAc...) asparagine glycan is attached at Asn90. 3 helical membrane-spanning segments follow: residues Ser120–Phe140, Thr152–Val171, and Cys189–Pro209. The tract at residues Gly229 to Pro265 is disordered. Over residues Glu232–Glu243 the composition is skewed to basic and acidic residues. A glycan (N-linked (GlcNAc...) asparagine) is linked at Asn261. Transmembrane regions (helical) follow at residues Val278–Ala298, Thr310–Val330, Val384–Ile404, Val418–Val438, Leu453–Phe473, Phe488–Gly510, Tyr522–Ile544, and Gly553–Ala573. The disordered stretch occupies residues Ala588–Ala610. A compositionally biased stretch (acidic residues) spans Glu594–Glu603.

This sequence belongs to the ATG22 family.

It is found in the vacuole membrane. Its function is as follows. Vacuolar effluxer which mediate the efflux of amino acids resulting from autophagic degradation. The release of autophagic amino acids allows the maintenance of protein synthesis and viability during nitrogen starvation. The chain is Autophagy-related protein 22-1 (atg22-1) from Aspergillus terreus (strain NIH 2624 / FGSC A1156).